The following is a 490-amino-acid chain: tRNA modification GTPase MnmE (490 aa).

(6S)-5-formyl-5,6,7,8-tetrahydrofolate is bound by residues arginine 23, glutamate 80, and lysine 133. A TrmE-type G domain is found at 229–412 (GIEVVIAGQP…LRRILLEVAG (184 aa)). Asparagine 239 is a binding site for K(+). GTP-binding positions include 239–244 (NAGKSS), 258–264 (TPVAGTT), and 283–286 (DTAG). Position 243 (serine 243) interacts with Mg(2+). K(+) is bound by residues threonine 258, valine 260, and threonine 263. Position 264 (threonine 264) interacts with Mg(2+). Positions 366–382 (PTAPTESAAVPPASARP) are enriched in low complexity. A disordered region spans residues 366–388 (PTAPTESAAVPPASARPAPAPRP). A GTP-binding site is contributed by 393–395 (SAR). A (6S)-5-formyl-5,6,7,8-tetrahydrofolate-binding site is contributed by lysine 490.

It belongs to the TRAFAC class TrmE-Era-EngA-EngB-Septin-like GTPase superfamily. TrmE GTPase family. As to quaternary structure, homodimer. Heterotetramer of two MnmE and two MnmG subunits. It depends on K(+) as a cofactor.

It is found in the cytoplasm. Its function is as follows. Exhibits a very high intrinsic GTPase hydrolysis rate. Involved in the addition of a carboxymethylaminomethyl (cmnm) group at the wobble position (U34) of certain tRNAs, forming tRNA-cmnm(5)s(2)U34. This chain is tRNA modification GTPase MnmE, found in Verminephrobacter eiseniae (strain EF01-2).